Reading from the N-terminus, the 938-residue chain is Isoleucine--tRNA ligase (938 aa).

Residues 58 to 68 (PYANGNIHIGH) carry the 'HIGH' region motif. E561 provides a ligand contact to L-isoleucyl-5'-AMP. Positions 602–606 (KMSKS) match the 'KMSKS' region motif. K605 provides a ligand contact to ATP. Residues C901, C904, C921, and C924 each coordinate Zn(2+).

The protein belongs to the class-I aminoacyl-tRNA synthetase family. IleS type 1 subfamily. In terms of assembly, monomer. Zn(2+) is required as a cofactor.

The protein resides in the cytoplasm. It catalyses the reaction tRNA(Ile) + L-isoleucine + ATP = L-isoleucyl-tRNA(Ile) + AMP + diphosphate. In terms of biological role, catalyzes the attachment of isoleucine to tRNA(Ile). As IleRS can inadvertently accommodate and process structurally similar amino acids such as valine, to avoid such errors it has two additional distinct tRNA(Ile)-dependent editing activities. One activity is designated as 'pretransfer' editing and involves the hydrolysis of activated Val-AMP. The other activity is designated 'posttransfer' editing and involves deacylation of mischarged Val-tRNA(Ile). The protein is Isoleucine--tRNA ligase of Yersinia enterocolitica serotype O:8 / biotype 1B (strain NCTC 13174 / 8081).